We begin with the raw amino-acid sequence, 498 residues long: POTE ankyrin domain family member A (498 aa).

ANK repeat units follow at residues 98 to 127, 131 to 160, 164 to 193, 197 to 226, and 230 to 259; these read KKRT…QLHV, KKRT…DPNL, YGNT…DIES, GGLT…NLNA, and FGRT…DVFS. Residues 289–410 form a disordered region; the sequence is NQMPNNSSGN…SNEKNKVKSQ (122 aa). Over residues 290-302 the composition is skewed to polar residues; sequence QMPNNSSGNSNPE. Residues 303-338 show a composition bias toward basic and acidic residues; sequence QDLKLTSEEEPQRLKGSENSQHEKVTQEPDINKDCD. Polar residues predominate over residues 348-359; that stretch reads HGSNNVGLSENL. Positions 392–406 are enriched in basic and acidic residues; it reads EEYHRPEKKSNEKNK. Residues 469–497 adopt a coiled-coil conformation; sequence EHLLELKNSHYEQLTVEVEQMENMVHVLQ.

The protein belongs to the POTE family.

This Homo sapiens (Human) protein is POTE ankyrin domain family member A (POTEA).